The chain runs to 460 residues: Notoamide biosynthesis cluster transcriptional coactivator notR (460 aa).

Residues 74-145 (LQDLARQVEI…EPMPNYVSHT (72 aa)) form the HTH iclR-type domain. The segment at residues 107–126 (IQDLADLAGVPDIQLRRVIR) is a DNA-binding region (H-T-H motif). Residues 300-320 (TRDFTPQPESSPRPGSASSRV) are disordered.

It localises to the nucleus. Transcription factor that probably regulates the expression of the gene cluster that mediates the biosynthesis of notoamide, a fungal indole alkaloid that belongs to a family of natural products containing a characteristic bicyclo[2.2.2]diazaoctane core. This chain is Notoamide biosynthesis cluster transcriptional coactivator notR, found in Aspergillus sp. (strain MF297-2).